The primary structure comprises 118 residues: UPF0134 protein MPN_287 (118 aa).

Belongs to the UPF0134 family.

This is UPF0134 protein MPN_287 from Mycoplasma pneumoniae (strain ATCC 29342 / M129 / Subtype 1) (Mycoplasmoides pneumoniae).